We begin with the raw amino-acid sequence, 186 residues long: MINRSSGKDRDRSRSGDKELRINHKIKAREVRVIFDNGTQSVLPIEDAIKCARDAELDLVEISPNSVPPVCKIIDYGKYKFHQEKRQKEQKRNQKIIKLKEVRMQPKIDTHDLDFKYRNILGFLKEGNKVKVTIRFRGRELAHTHLGYGILESILERVGESNYVLESPAKMEGKTMFLIIAPKSKK.

Residues 1–21 (MINRSSGKDRDRSRSGDKELR) are disordered.

This sequence belongs to the IF-3 family. As to quaternary structure, monomer.

It is found in the cytoplasm. Its function is as follows. IF-3 binds to the 30S ribosomal subunit and shifts the equilibrium between 70S ribosomes and their 50S and 30S subunits in favor of the free subunits, thus enhancing the availability of 30S subunits on which protein synthesis initiation begins. In Borrelia turicatae (strain 91E135), this protein is Translation initiation factor IF-3.